Consider the following 391-residue polypeptide: Sister chromatid cohesion protein DCC1 (391 aa).

Belongs to the DCC1 family. As to quaternary structure, component of the ctf18-RFC complex which consists of ctf18, ctf8, dscc1 and the RFC complex.

Its subcellular location is the nucleus. Loads pcna onto primed templates regulating velocity, spacing and restart activity of replication forks. May couple DNA replication to sister chromatid cohesion. This is Sister chromatid cohesion protein DCC1 (dscc1) from Xenopus tropicalis (Western clawed frog).